We begin with the raw amino-acid sequence, 658 residues long: DNA mismatch repair protein MutL (658 aa).

Disordered stretches follow at residues 114–137 (RQNDSSHATQVKAEDGKLSSPTAA) and 437–456 (RFGNMPSETPAPQTDTPLSD). Over residues 442–456 (PSETPAPQTDTPLSD) the composition is skewed to polar residues.

It belongs to the DNA mismatch repair MutL/HexB family.

Its function is as follows. This protein is involved in the repair of mismatches in DNA. It is required for dam-dependent methyl-directed DNA mismatch repair. May act as a 'molecular matchmaker', a protein that promotes the formation of a stable complex between two or more DNA-binding proteins in an ATP-dependent manner without itself being part of a final effector complex. This chain is DNA mismatch repair protein MutL, found in Neisseria meningitidis serogroup B (strain ATCC BAA-335 / MC58).